We begin with the raw amino-acid sequence, 494 residues long: Ubiquinol-cytochrome-c reductase complex core protein I, mitochondrial (494 aa).

H70 serves as a coordination point for Zn(2+). Catalysis depends on E73, which acts as the Proton acceptor. Zn(2+) is bound by residues H74 and E150.

This sequence belongs to the peptidase M16 family. UQCRC1/QCR1 subfamily. As to quaternary structure, component of the ubiquinol-cytochrome c oxidoreductase (cytochrome b-c1 complex, complex III, CIII), a multisubunit enzyme composed of 10 subunits. The complex is composed of 3 respiratory subunits cytochrome b, cytochrome c1 and Rieske protein, 2 core protein subunits, and additional low-molecular weight protein subunits. The complex exists as an obligatory dimer and forms supercomplexes (SCs) in the inner mitochondrial membrane with cytochrome c oxidase (complex IV, CIV). The cofactor is Zn(2+). Post-translationally, the N-terminus is blocked.

It localises to the mitochondrion inner membrane. Functionally, component of the ubiquinol-cytochrome c oxidoreductase, a multisubunit transmembrane complex that is part of the mitochondrial electron transport chain which drives oxidative phosphorylation. The respiratory chain contains 3 multisubunit complexes succinate dehydrogenase (complex II, CII), ubiquinol-cytochrome c oxidoreductase (cytochrome b-c1 complex, complex III, CIII) and cytochrome c oxidase (complex IV, CIV), that cooperate to transfer electrons derived from NADH and succinate to molecular oxygen, creating an electrochemical gradient over the inner membrane that drives transmembrane transport and the ATP synthase. The cytochrome b-c1 complex catalyzes electron transfer from ubiquinol to cytochrome c, linking this redox reaction to translocation of protons across the mitochondrial inner membrane, with protons being carried across the membrane as hydrogens on the quinol. In the process called Q cycle, 2 protons are consumed from the matrix, 4 protons are released into the intermembrane space and 2 electrons are passed to cytochrome c. This is Ubiquinol-cytochrome-c reductase complex core protein I, mitochondrial from Euglena gracilis.